The primary structure comprises 1353 residues: Protein prickle (1353 aa).

3 disordered regions span residues 130 to 206 (VDDG…TKRN), 266 to 292 (QEEEPPEPPKPALPPKQKQPRPVPPLP), and 500 to 540 (AKYS…SAHA). The span at 147–165 (TPTATATAGRPLFPLSSSP) shows a compositional bias: low complexity. Basic residues predominate over residues 166-178 (RRSKKLLRSLRAH). Over residues 179–189 (VKGESRPEKPA) the composition is skewed to basic and acidic residues. The segment covering 514 to 532 (LSPALSTPSPPSLLHHPAA) has biased composition (low complexity). A PET domain is found at 548-656 (MDMQRQSHSD…NVRQLMSARP (109 aa)). LIM zinc-binding domains are found at residues 655–719 (RPCD…ETLK), 720–780 (PRCS…MFAE), and 781–843 (YCDY…GEPP). Disordered regions lie at residues 840 to 892 (GEPP…HQAS), 933 to 962 (HCRSGDHAGGGDFTDFSGGRASSTSHNMSP), and 1062 to 1303 (ADIM…SSSS). Residues 861–892 (TQRVRPQTRITSSHASSSPPMSPQQQQQHQAS) show a composition bias toward low complexity. Polar residues-rich tracts occupy residues 952–962 (RASSTSHNMSP) and 1111–1120 (SLNTPLSAHS). Over residues 1130 to 1142 (SILSGASSSSPMS) the composition is skewed to low complexity. Basic and acidic residues predominate over residues 1177–1205 (GDKDRDRDRERDRDRDRDKGGDKDRESGR). 2 stretches are compositionally biased toward basic residues: residues 1207 to 1220 (GPGHSSRRRRRRKS) and 1228 to 1240 (NHHRSGSGHRSHS). Positions 1269–1284 (ETAHKSPRQQRERERE) are enriched in basic and acidic residues.

It belongs to the prickle / espinas / testin family. In terms of assembly, interacts with dsh; PET and LIM domains interact with dsh DEP domain, in wing cells. Interacts with Vang in photoreceptor cells.

It is found in the cell membrane. Functionally, acts in a planar cell polarity (PCP) complex; polarization along the apical/basal axis of epithelial cells. PCP signaling in the wing disk requires the receptor fz and the cytoplasmic proteins dsh and pk. These act in a feedback loop leading to activation of the jnk cascade and subsequent polarized arrangement of hairs and bristles. Dgo and pk compete with one another for dsh binding, thereby modulating fz dsh activity and ensuring tight control over fz PCP signaling. Vang, stan and pk function together to regulate the establishment of tissue polarity in the adult eye. In Drosophila pseudoobscura pseudoobscura (Fruit fly), this protein is Protein prickle.